The sequence spans 159 residues: 2-C-methyl-D-erythritol 2,4-cyclodiphosphate synthase (159 aa).

Residues aspartate 10 and histidine 12 each contribute to the a divalent metal cation site. Residues 10-12 (DVH) and 36-37 (HS) each bind 4-CDP-2-C-methyl-D-erythritol 2-phosphate. Histidine 44 provides a ligand contact to a divalent metal cation. Residues 58–60 (DIG), 134–137 (TTSE), phenylalanine 141, and arginine 144 each bind 4-CDP-2-C-methyl-D-erythritol 2-phosphate.

Belongs to the IspF family. Homotrimer. A divalent metal cation serves as cofactor.

The enzyme catalyses 4-CDP-2-C-methyl-D-erythritol 2-phosphate = 2-C-methyl-D-erythritol 2,4-cyclic diphosphate + CMP. The protein operates within isoprenoid biosynthesis; isopentenyl diphosphate biosynthesis via DXP pathway; isopentenyl diphosphate from 1-deoxy-D-xylulose 5-phosphate: step 4/6. Its function is as follows. Involved in the biosynthesis of isopentenyl diphosphate (IPP) and dimethylallyl diphosphate (DMAPP), two major building blocks of isoprenoid compounds. Catalyzes the conversion of 4-diphosphocytidyl-2-C-methyl-D-erythritol 2-phosphate (CDP-ME2P) to 2-C-methyl-D-erythritol 2,4-cyclodiphosphate (ME-CPP) with a corresponding release of cytidine 5-monophosphate (CMP). The chain is 2-C-methyl-D-erythritol 2,4-cyclodiphosphate synthase from Cereibacter sphaeroides (strain ATCC 17029 / ATH 2.4.9) (Rhodobacter sphaeroides).